The following is a 235-amino-acid chain: Large ribosomal subunit protein uL1 (235 aa).

It belongs to the universal ribosomal protein uL1 family. Part of the 50S ribosomal subunit.

In terms of biological role, binds directly to 23S rRNA. The L1 stalk is quite mobile in the ribosome, and is involved in E site tRNA release. Functionally, protein L1 is also a translational repressor protein, it controls the translation of the L11 operon by binding to its mRNA. This Paenarthrobacter aurescens (strain TC1) protein is Large ribosomal subunit protein uL1.